Reading from the N-terminus, the 1331-residue chain is Alpha,alpha-trehalose-phosphate synthase [UDP-forming] 1 (1331 aa).

Residues 1–13 (MTDTATGVHSNAN) are compositionally biased toward polar residues. 3 disordered regions span residues 1 to 50 (MTDT…DNDP), 71 to 118 (TGKE…SGQL), and 1312 to 1331 (PMDQ…SFGN). Over residues 39 to 50 (DPFDRPKNDNDP) the composition is skewed to basic and acidic residues. Residues 77–98 (LDESDDMTENEDHDEMANEDDG) are compositionally biased toward acidic residues. A compositionally biased stretch (basic and acidic residues) spans 102 to 112 (NEKKVETRKMD). Positions 1318 to 1331 (SSTLGASLGTSFGN) are enriched in polar residues.

The protein in the N-terminal section; belongs to the glycosyltransferase 20 family. In the C-terminal section; belongs to the gob-1 trehalose phosphatase family.

The catalysed reaction is D-glucose 6-phosphate + UDP-alpha-D-glucose = alpha,alpha-trehalose 6-phosphate + UDP + H(+). Catalyzes the production of trehalose from glucose-6-phosphate and UDP-alpha-D-glucose in a 2 step process. In Caenorhabditis elegans, this protein is Alpha,alpha-trehalose-phosphate synthase [UDP-forming] 1 (tps-1).